We begin with the raw amino-acid sequence, 414 residues long: Mannan endo-1,4-beta-mannosidase 2 (414 aa).

Positions 1 to 25 (MAYFQRLISCIFVLFLLSLAFACEA) are cleaved as a signal peptide. The substrate site is built by W95 and N210. E211 (proton donor) is an active-site residue. Y288 contacts substrate. The active-site Nucleophile is the E328. W370 provides a ligand contact to substrate.

This sequence belongs to the glycosyl hydrolase 5 (cellulase A) family.

It is found in the secreted. It carries out the reaction Random hydrolysis of (1-&gt;4)-beta-D-mannosidic linkages in mannans, galactomannans and glucomannans.. Its function is as follows. Possesses endo-beta-mannanase activity in vitro. May be involved in seed germination by weakening the endosperm cap prior to radicle emergence. The protein is Mannan endo-1,4-beta-mannosidase 2 (MAN2) of Solanum lycopersicum (Tomato).